Consider the following 368-residue polypeptide: DNA replication and repair protein RecF (368 aa).

30-37 provides a ligand contact to ATP; that stretch reads GNNAQGKT.

The protein belongs to the RecF family.

Its subcellular location is the cytoplasm. Its function is as follows. The RecF protein is involved in DNA metabolism; it is required for DNA replication and normal SOS inducibility. RecF binds preferentially to single-stranded, linear DNA. It also seems to bind ATP. The polypeptide is DNA replication and repair protein RecF (Streptococcus pyogenes serotype M5 (strain Manfredo)).